Here is a 605-residue protein sequence, read N- to C-terminus: Replication and transcription activator (605 aa).

Disordered stretches follow at residues 307–381 (SLPS…EPEQ) and 447–501 (RIRP…TPEA). Residues 321–338 (SADCGDSSSSSSDSGNSD) are compositionally biased toward low complexity. Basic and acidic residues predominate over residues 341-353 (QSEREEARAEAPR). Residues 355–364 (RAPKSRRTSR) show a composition bias toward basic residues.

Belongs to the herpesviridae Rta family. Interacts with human ATF7IP protein, leading to promote and regulate host genes in virus-infected cells. Interacts with RNA polymerase III complex; this interaction downregulates small RNA transcription and 5'-pppRNA production.

It localises to the host nucleus. The protein resides in the virion tegument. Immediate-early transcription factor that controls the initiation of viral lytic gene expression and lytic reactivation from latency. Triggers lytic replication, and initiates a cellular senescence program in epithelial cells. Up-regulates human DCR3/TNFRSF6B by directly binding to its receptor. Globally induces a proteasome-dependent loss of SUMOylated proteins in the host cell and the loss of promeylocytic leukemia nuclear bodies. Improves the stability of the triplex capsid protein TRX1 by reducing the ubiquitination level of the latter. Mediates evasion of inflammasome activation and antiviral responses (T- and NK cell activation) during EBV early lytic infection. The chain is Replication and transcription activator from Epstein-Barr virus (strain GD1) (HHV-4).